Reading from the N-terminus, the 84-residue chain is Large ribosomal subunit protein bL27 (84 aa).

A disordered region spans residues 1–22; that stretch reads MAHKKAGGSTRNGRDSESKRLG.

Belongs to the bacterial ribosomal protein bL27 family.

This chain is Large ribosomal subunit protein bL27, found in Shewanella baltica (strain OS223).